Reading from the N-terminus, the 464-residue chain is Protein FAM90A16 (464 aa).

Disordered regions lie at residues 1–42 (MMAR…DPRL), 70–389 (PATL…HDGA), and 415–437 (HSPE…SEAP). Basic and acidic residues-rich tracts occupy residues 74–89 (GKKE…KPRV) and 97–114 (NKDK…DPQR). Residues 180–197 (LASLSPLRKASLSSSSSL) show a composition bias toward low complexity.

This sequence belongs to the FAM90 family.

In Homo sapiens (Human), this protein is Protein FAM90A16.